The sequence spans 201 residues: MSQQRILPQSKETLLQSYNKRLKDDIKSIMDNFTEIIKTAKIEEEHQVSRSTQGEQDNYEMHVRSANIVRAGESLMKLVSDLKQFLILNDFPSVNESINQRNQQLRTLREECDKKLIALRDDIAIDLYELEEEYYSSSYSVCDPSDLPLCEVYWNRESTASSPEDLSVPLAPIMAEASTVTSQIHTPPHLNGHGAGMTEHT.

Positions 93-123 (SVNESINQRNQQLRTLREECDKKLIALRDDI) form a coiled coil. Residues 182–201 (SQIHTPPHLNGHGAGMTEHT) are disordered.

The protein belongs to the Mediator complex subunit 22 family. As to quaternary structure, component of the Mediator complex.

It is found in the nucleus. Functionally, component of the Mediator complex, a coactivator involved in the regulated transcription of nearly all RNA polymerase II-dependent genes. Mediator functions as a bridge to convey information from gene-specific regulatory proteins to the basal RNA polymerase II transcription machinery. Mediator is recruited to promoters by direct interactions with regulatory proteins and serves as a scaffold for the assembly of a functional preinitiation complex with RNA polymerase II and the general transcription factors. The chain is Mediator of RNA polymerase II transcription subunit 22 (med22) from Xenopus laevis (African clawed frog).